Here is a 322-residue protein sequence, read N- to C-terminus: Ferredoxin--NADP reductase (322 aa).

7 residues coordinate FAD: Asp-34, Gln-42, Tyr-47, Val-87, Phe-120, Asp-279, and Thr-320.

It belongs to the ferredoxin--NADP reductase type 2 family. Homodimer. FAD serves as cofactor.

The catalysed reaction is 2 reduced [2Fe-2S]-[ferredoxin] + NADP(+) + H(+) = 2 oxidized [2Fe-2S]-[ferredoxin] + NADPH. This is Ferredoxin--NADP reductase from Streptococcus sanguinis (strain SK36).